A 372-amino-acid polypeptide reads, in one-letter code: Fatty acid 2-hydroxylase (372 aa).

Residues 8–86 (AASFSPSEVQ…LEQYYVGELR (79 aa)) enclose the Cytochrome b5 heme-binding domain. Positions 43 and 69 each coordinate heme. 2 consecutive transmembrane segments (helical) span residues 168–188 (VWYS…WSYY) and 213–233 (SMFP…EYLI). The Fatty acid hydroxylase domain maps to 219–361 (FMLGIFLWSL…TKLWDYCFHT (143 aa)). Zn(2+) is bound by residues histidine 234, histidine 239, histidine 257, histidine 260, and histidine 261. 2 helical membrane-spanning segments follow: residues 271 to 291 (VFPP…LQLI) and 292 to 312 (LPEA…VLYD). Zn(2+) contacts are provided by histidine 315, histidine 319, histidine 336, histidine 339, and histidine 340.

This sequence belongs to the sterol desaturase family. SCS7 subfamily. Zn(2+) is required as a cofactor.

It localises to the endoplasmic reticulum membrane. Its subcellular location is the microsome membrane. It carries out the reaction a 1,2-saturated fatty acid + 2 Fe(II)-[cytochrome b5] + O2 + 2 H(+) = a (R)-2-hydroxy fatty acid + 2 Fe(III)-[cytochrome b5] + H2O. It catalyses the reaction hexadecanoate + 2 Fe(II)-[cytochrome b5] + O2 + 2 H(+) = (R)-2-hydroxyhexadecanoate + 2 Fe(III)-[cytochrome b5] + H2O. The catalysed reaction is octadecanoate + 2 Fe(II)-[cytochrome b5] + O2 + 2 H(+) = (R)-2-hydroxyoctadecanoate + 2 Fe(III)-[cytochrome b5] + H2O. The enzyme catalyses docosanoate + 2 Fe(II)-[cytochrome b5] + O2 + 2 H(+) = 2-hydroxydocosanoate + 2 Fe(III)-[cytochrome b5] + H2O. It carries out the reaction tetracosanoate + 2 Fe(II)-[cytochrome b5] + O2 + 2 H(+) = (R)-2-hydroxytetracosanoate + 2 Fe(III)-[cytochrome b5] + H2O. It functions in the pathway lipid metabolism; fatty acid metabolism. Its pathway is sphingolipid metabolism; galactosylceramide biosynthesis. Functionally, catalyzes the hydroxylation of free fatty acids at the C-2 position to produce 2-hydroxy fatty acids, which are building blocks of sphingolipids and glycosphingolipids common in neural tissue and epidermis. FA2H is stereospecific for the production of (R)-2-hydroxy fatty acids. Plays an essential role in the synthesis of galactosphingolipids of the myelin sheath. Responsible for the synthesis of sphingolipids and glycosphingolipids involved in the formation of epidermal lamellar bodies critical for skin permeability barrier. Participates in the synthesis of glycosphingolipids and a fraction of type II wax diesters in sebaceous gland, specifically regulating hair follicle homeostasis. Involved in the synthesis of sphingolipids of plasma membrane rafts, controlling lipid raft mobility and trafficking of raft-associated proteins. The sequence is that of Fatty acid 2-hydroxylase (FA2H) from Macaca fascicularis (Crab-eating macaque).